Consider the following 429-residue polypeptide: Serine hydroxymethyltransferase (429 aa).

Residues Leu-126 and 130-132 each bind (6S)-5,6,7,8-tetrahydrofolate; that span reads GHL. Lys-235 bears the N6-(pyridoxal phosphate)lysine mark. 359 to 361 contributes to the (6S)-5,6,7,8-tetrahydrofolate binding site; sequence SPF.

This sequence belongs to the SHMT family. In terms of assembly, homodimer. It depends on pyridoxal 5'-phosphate as a cofactor.

It localises to the cytoplasm. The enzyme catalyses (6R)-5,10-methylene-5,6,7,8-tetrahydrofolate + glycine + H2O = (6S)-5,6,7,8-tetrahydrofolate + L-serine. It participates in one-carbon metabolism; tetrahydrofolate interconversion. It functions in the pathway amino-acid biosynthesis; glycine biosynthesis; glycine from L-serine: step 1/1. Its function is as follows. Catalyzes the reversible interconversion of serine and glycine with tetrahydrofolate (THF) serving as the one-carbon carrier. This reaction serves as the major source of one-carbon groups required for the biosynthesis of purines, thymidylate, methionine, and other important biomolecules. Also exhibits THF-independent aldolase activity toward beta-hydroxyamino acids, producing glycine and aldehydes, via a retro-aldol mechanism. This chain is Serine hydroxymethyltransferase, found in Parasynechococcus marenigrum (strain WH8102).